A 740-amino-acid chain; its full sequence is NAD(P)H-quinone oxidoreductase subunit 5, chloroplastic (740 aa).

16 consecutive transmembrane segments (helical) span residues 9–29, 40–60, 89–109, 125–145, 147–167, 185–205, 221–241, 258–278, 283–303, 327–347, 354–374, 396–416, 425–445, 547–567, 606–626, and 718–738; these read WIIP…LLLF, WSFL…YLSI, IDPL…FVLI, FAYM…SNLI, IYFF…FWFT, GDFG…SFEF, VNLL…IAKS, TPIS…FLVA, LFIV…ITIL, LGYM…FHLI, ALLF…VGYS, TAFL…CFWS, LLFS…TAFY, ILFP…IGIP, FSVS…KPFY, and ISSY…FLKI.

The protein belongs to the complex I subunit 5 family. NDH is composed of at least 16 different subunits, 5 of which are encoded in the nucleus.

It is found in the plastid. It localises to the chloroplast thylakoid membrane. It carries out the reaction a plastoquinone + NADH + (n+1) H(+)(in) = a plastoquinol + NAD(+) + n H(+)(out). It catalyses the reaction a plastoquinone + NADPH + (n+1) H(+)(in) = a plastoquinol + NADP(+) + n H(+)(out). NDH shuttles electrons from NAD(P)H:plastoquinone, via FMN and iron-sulfur (Fe-S) centers, to quinones in the photosynthetic chain and possibly in a chloroplast respiratory chain. The immediate electron acceptor for the enzyme in this species is believed to be plastoquinone. Couples the redox reaction to proton translocation, and thus conserves the redox energy in a proton gradient. The protein is NAD(P)H-quinone oxidoreductase subunit 5, chloroplastic (ndhF) of Aethionema grandiflorum (Persian stone-cress).